A 429-amino-acid polypeptide reads, in one-letter code: Queuine tRNA-ribosyltransferase accessory subunit 2 (429 aa).

Zn(2+) is bound by residues cysteine 330, cysteine 332, cysteine 335, and histidine 361.

This sequence belongs to the queuine tRNA-ribosyltransferase family. QTRT2 subfamily. As to quaternary structure, heterodimer of a catalytic subunit and an accessory subunit. Zn(2+) is required as a cofactor.

The protein localises to the cytoplasm. Its function is as follows. Non-catalytic subunit of the queuine tRNA-ribosyltransferase (TGT) that catalyzes the base-exchange of a guanine (G) residue with queuine (Q) at position 34 (anticodon wobble position) in tRNAs with GU(N) anticodons (tRNA-Asp, -Asn, -His and -Tyr), resulting in the hypermodified nucleoside queuosine (7-(((4,5-cis-dihydroxy-2-cyclopenten-1-yl)amino)methyl)-7-deazaguanosine). In Culex quinquefasciatus (Southern house mosquito), this protein is Queuine tRNA-ribosyltransferase accessory subunit 2.